A 97-amino-acid polypeptide reads, in one-letter code: Scorpine-like peptide Ev37 (97 aa).

Residues 1–19 (MNSKLTVIVLLALITIASC) form the signal peptide. In terms of domain architecture, BetaSPN-type CS-alpha/beta spans 55 to 95 (QNLCAFNVDTVGMCDADCKRQGKAKGVCHGTKCKCDVELSY). Intrachain disulfides connect C58–C82, C68–C87, and C72–C89.

Belongs to the long chain scorpion toxin family. Class 3 subfamily. Expressed by the venom gland.

The protein resides in the secreted. Functionally, selectively inhibits Kv1.3/KCNA3 channel (IC(50)=0.95 uM). Both N-terminal and C-terminal domains are likely involved in the interaction with Kv1.3/KCNA3, since neither its N-terminal domain (1-36) nor its C-terminal domain (37-78) block Kv1.3/KCNA3 channel. In Euscorpiops validus (Scorpion), this protein is Scorpine-like peptide Ev37.